Reading from the N-terminus, the 226-residue chain is Ribosomal RNA small subunit methyltransferase G (226 aa).

Residues Gly-95, Leu-100, 146–147 (VE), and Arg-159 contribute to the S-adenosyl-L-methionine site.

The protein belongs to the methyltransferase superfamily. RNA methyltransferase RsmG family.

It localises to the cytoplasm. The catalysed reaction is guanosine(527) in 16S rRNA + S-adenosyl-L-methionine = N(7)-methylguanosine(527) in 16S rRNA + S-adenosyl-L-homocysteine. Functionally, specifically methylates the N7 position of guanine in position 527 of 16S rRNA. This chain is Ribosomal RNA small subunit methyltransferase G, found in Acidovorax sp. (strain JS42).